The chain runs to 296 residues: uncharacterized protein (296 aa).

It is found in the mitochondrion. This is an uncharacterized protein from Podospora anserina (strain S / ATCC MYA-4624 / DSM 980 / FGSC 10383) (Pleurage anserina).